A 257-amino-acid polypeptide reads, in one-letter code: Coenzyme F420:L-glutamate ligase (257 aa).

GTP contacts are provided by residues 9-12, 38-39, and K43; these read VPEV and ST. Residue D113 coordinates a divalent metal cation. N116 is a GTP binding site. A divalent metal cation-binding residues include D154, T155, and E212. 210–217 serves as a coordination point for GTP; sequence TGEGDGGT.

Belongs to the CofE family. Homodimer. The cofactor is Mg(2+). Mn(2+) is required as a cofactor. K(+) serves as cofactor.

It carries out the reaction oxidized coenzyme F420-0 + GTP + L-glutamate = oxidized coenzyme F420-1 + GDP + phosphate + H(+). It catalyses the reaction oxidized coenzyme F420-1 + GTP + L-glutamate = oxidized coenzyme F420-2 + GDP + phosphate + H(+). It participates in cofactor biosynthesis; coenzyme F420 biosynthesis. Catalyzes the GTP-dependent successive addition of two or more gamma-linked L-glutamates to the L-lactyl phosphodiester of 7,8-didemethyl-8-hydroxy-5-deazariboflavin (F420-0) to form coenzyme F420-0-glutamyl-glutamate (F420-2) or polyglutamated F420 derivatives. The polypeptide is Coenzyme F420:L-glutamate ligase (Haloarcula marismortui (strain ATCC 43049 / DSM 3752 / JCM 8966 / VKM B-1809) (Halobacterium marismortui)).